The following is a 456-amino-acid chain: uncharacterized protein (456 aa).

2 stretches are compositionally biased toward basic and acidic residues: residues 181–210 (DQRKESIVNDERKKNPEFREKPDKNEDKKV) and 217–231 (KEIENKGIDHEENEE). Positions 181-231 (DQRKESIVNDERKKNPEFREKPDKNEDKKVKPPPSLKEIENKGIDHEENEE) are disordered. Residues 216–248 (LKEIENKGIDHEENEEDKKRELMFKLQLLQKQY) adopt a coiled-coil conformation. A helical membrane pass occupies residues 347–365 (LALAILFNAVWFIAAKMIM). A compositionally biased stretch (polar residues) spans 383–407 (NKSGTTPNSVSPRTWGNSKSPQSEF). Residues 383–456 (NKSGTTPNSV…MREQGIETLK (74 aa)) form a disordered region. Positions 441–456 (DESRREMREQGIETLK) are enriched in basic and acidic residues.

This sequence belongs to the IIV-6 067R family.

Its subcellular location is the membrane. This is an uncharacterized protein from Invertebrate iridescent virus 6 (IIV-6).